The following is a 326-amino-acid chain: Pantothenate kinase (326 aa).

104–111 (GSVAVGKS) provides a ligand contact to ATP.

The protein belongs to the prokaryotic pantothenate kinase family.

The protein localises to the cytoplasm. The catalysed reaction is (R)-pantothenate + ATP = (R)-4'-phosphopantothenate + ADP + H(+). Its pathway is cofactor biosynthesis; coenzyme A biosynthesis; CoA from (R)-pantothenate: step 1/5. This Parvibaculum lavamentivorans (strain DS-1 / DSM 13023 / NCIMB 13966) protein is Pantothenate kinase.